The primary structure comprises 940 residues: MSVFNKLMRAGEGKILRKLHRIADQVSSIEEDFVNLSDAELRALTDEYKERYADGESLDDLLPEAFATVREAAKRVLGQRHYDVQMMGGVALHLGYVAEMKTGEGKTLVGTLPAYLNALSGKGVHLITVNDYLAERDSELMGRVHKFLGLSVGCIVANMTPAQRREQYGCDITYGTNNEFGFDYLRDNMAWSKDELVQRGHNFAVVDEVDSILVDEARTPLIISGPADQPPSGTADFAKLVTRLTKGEAGNQLKGIEETGDYEVDEKKRTVAIHEAGVAKVEDWLGIDNLYESVNTPLVGYLNNAIKAKELFKKDKDYVVIDGEVMIVDEHTGRILAGRRYNEGMHQAIEAKEGVDIKDENQTLATITLQQNFFRLYDKLSGMTGTAMTEAAEFHQIYKLGVVPIPTNRPMVRADQSDLIYRTEVAKFAAVVDDIAEKHEKGQPILVGTTSVEKSEYLSQQLSKRGVQHEVLNAKQHDREATIVAQAGRKGAVTVATNMAGRGTDIKLGGNPDDLAEAELRQRGLDPVENVEEWAAALPAALETAEQAVKAEFEEVKDLGGLYVLGTERHESRRIDNQLRGRSGRQGDPGESRFYLSLGDDLMRLFKAQMVERVMSMANVPDDVPIENKMVTRAIASAQSQVEQQNFETRKNVLKYDEVLNRQREVIYGERRRVLEGEDLQEQIRHFMDDTIDDYIRQETAEGFAEEWDLDRLWGAFKQLYPVKVTVDELEEAAGDLAGVTAEFIAESVKNDIHEQYEERENTLGSDIMRELEPRWVLSVLDRKWREHLYEMDYLQEGIGLRAMAQKDPLVEYQREGFDMFNAMMEGIKEESVGYLFNLEVQVEQQVEEVPVQDGAERPSLEKEGATAAPQIRAKGLEAPQRPDRLHFSAPTVDGEGGVVEGDFANDEATGDTRSGSADGMTRADAARRRKGGGGRRRKK.

Residues glutamine 85, 103–107, and aspartate 505 each bind ATP; that span reads GEGKT. The interval 851 to 940 is disordered; the sequence is PVQDGAERPS…KGGGGRRRKK (90 aa). A compositionally biased stretch (basic and acidic residues) spans 855–865; it reads GAERPSLEKEG. Over residues 928-940 the composition is skewed to basic residues; sequence RRRKGGGGRRRKK.

This sequence belongs to the SecA family. In terms of assembly, monomer and homodimer. Part of the essential Sec protein translocation apparatus which comprises SecA, SecYEG and auxiliary proteins SecDF. Other proteins may also be involved.

The protein localises to the cell membrane. Its subcellular location is the cytoplasm. It catalyses the reaction ATP + H2O + cellular proteinSide 1 = ADP + phosphate + cellular proteinSide 2.. Its function is as follows. Part of the Sec protein translocase complex. Interacts with the SecYEG preprotein conducting channel. Has a central role in coupling the hydrolysis of ATP to the transfer of proteins into and across the cell membrane, serving as an ATP-driven molecular motor driving the stepwise translocation of polypeptide chains across the membrane. The sequence is that of Protein translocase subunit SecA from Streptomyces griseus.